Reading from the N-terminus, the 1283-residue chain is MWGSDRLAGAGGGGAAVTVAFTNARDCFLHLPRRLVAQLHLLQNQAIEVVWSHQPAFLSWVEGRHFSDQGENVAEINRQVGQKLGLSNGGQVFLKPCSHVVSCQQVEVEPLSADDWEILELHAVSLEQHLLDQIRIVFPKAIFPVWVDQQTYIFIQIVALIPAASYGRLETDTKLLIQPKTRRAKENTFSKADAEYKKLHSYGRDQKGMMKELQTKQLQSNTVGITESNENESEIPVDSSSVASLWTMIGSIFSFQSEKKQETSWGLTEINAFKNMQSKVVPLDNIFRVCKSQPPSIYNASATSVFHKHCAIHVFPWDQEYFDVEPSFTVTYGKLVKLLSPKQQQSKTKQNVLSPEKEKQMSEPLDQKKIRSDHNEEDEKACVLQVVWNGLEELNNAIKYTKNVEVLHLGKVWIPDDLRKRLNIEMHAVVRITPVEVTPKIPRSLKLQPRENLPKDISEEDIKTVFYSWLQQSTTTMLPLVISEEEFIKLETKDGLKEFSLSIVHSWEKEKDKNIFLLSPNLLQKTTIQVLLDPMVKEENSEEIDFILPFLKLSSLGGVNSLGVSSLEHITHSLLGRPLSRQLMSLVAGLRNGALLLTGGKGSGKSTLAKAICKEAFDKLDAHVERVDCKALRGKRLENIQKTLEVAFSEAVWMQPSVVLLDDLDLIAGLPAVPEHEHSPDAVQSQRLAHALNDMIKEFISMGSLVALIATSQSQQSLHPLLVSAQGVHIFQCVQHIQPPNQEQRCEILCNVIKNKLDCDINKFTDLDLQHVAKETGGFVARDFTVLVDRAIHSRLSRQSISTREKLVLTTLDFQKALRGFLPASLRSVNLHKPRDLGWDKIGGLHEVRQILMDTIQLPAKYPELFANLPIRQRTGILLYGPPGTGKTLLAGVIARESRMNFISVKGPELLSKYIGASEQAVRDIFIRAQAAKPCILFFDEFESIAPRRGHDNTGVTDRVVNQLLTQLDGVEGLQGVYVLAATSRPDLIDPALLRPGRLDKCVYCPPPDQVSRLEILNVLSDSLPLADDVDLQHVASVTDSFTGADLKALLYNAQLEALHGMLLSSGLQDGSSSSDSDLSLSSMVFLNHSSGSDDSAGDGECGLDQSLVSLEMSEILPDESKFNMYRLYFGSSYESELGNGTSSDLSSQCLSAPSSMTQDLPGVPGKDQLFSQPPVLRTASQEGCQELTQEQRDQLRADISIIKGRYRSQSGEDESMNQPGPIKTRLAISQSHLMTALGHTRPSISEDDWKNFAELYESFQNPKRRKNQSGTMFRPGQKVTLA.

The tract at residues 346–367 is disordered; that stretch reads SKTKQNVLSPEKEKQMSEPLDQ. Serine 354 carries the post-translational modification Phosphoserine. A compositionally biased stretch (basic and acidic residues) spans 355-367; that stretch reads PEKEKQMSEPLDQ. ATP is bound by residues 599-606 and 881-888; these read GGKGSGKS and GPPGTGKT. Serine 1181, serine 1209, and serine 1211 each carry phosphoserine. The interval 1260 to 1283 is disordered; the sequence is FQNPKRRKNQSGTMFRPGQKVTLA.

Belongs to the AAA ATPase family. Homooligomer; homooligomerizes in the cytosol, interaction with PEX6 promotes dissociation of the homooligomer. Interacts with PEX6; forming the PEX1-PEX6 AAA ATPase complex, which is composed of a heterohexamer formed by a trimer of PEX1-PEX6 dimers. Interacts indirectly with PEX26, via its interaction with PEX6.

It localises to the cytoplasm. It is found in the cytosol. Its subcellular location is the peroxisome membrane. The enzyme catalyses ATP + H2O = ADP + phosphate + H(+). Component of the PEX1-PEX6 AAA ATPase complex, a protein dislocase complex that mediates the ATP-dependent extraction of the PEX5 receptor from peroxisomal membranes, an essential step for PEX5 recycling. Specifically recognizes PEX5 monoubiquitinated at 'Cys-11', and pulls it out of the peroxisome lumen through the PEX2-PEX10-PEX12 retrotranslocation channel. Extraction by the PEX1-PEX6 AAA ATPase complex is accompanied by unfolding of the TPR repeats and release of bound cargo from PEX5. The protein is Peroxisomal ATPase PEX1 of Homo sapiens (Human).